The primary structure comprises 247 residues: 4-hydroxy-tetrahydrodipicolinate reductase (247 aa).

NAD(+) is bound by residues 12–17, 78–80, and 102–105; these read GITGRM, GTT, and AANF. Catalysis depends on His-136, which acts as the Proton donor/acceptor. His-137 contributes to the (S)-2,3,4,5-tetrahydrodipicolinate binding site. Catalysis depends on Lys-140, which acts as the Proton donor. 146–147 is a (S)-2,3,4,5-tetrahydrodipicolinate binding site; the sequence is GT.

This sequence belongs to the DapB family.

The protein resides in the cytoplasm. It carries out the reaction (S)-2,3,4,5-tetrahydrodipicolinate + NAD(+) + H2O = (2S,4S)-4-hydroxy-2,3,4,5-tetrahydrodipicolinate + NADH + H(+). It catalyses the reaction (S)-2,3,4,5-tetrahydrodipicolinate + NADP(+) + H2O = (2S,4S)-4-hydroxy-2,3,4,5-tetrahydrodipicolinate + NADPH + H(+). It functions in the pathway amino-acid biosynthesis; L-lysine biosynthesis via DAP pathway; (S)-tetrahydrodipicolinate from L-aspartate: step 4/4. Functionally, catalyzes the conversion of 4-hydroxy-tetrahydrodipicolinate (HTPA) to tetrahydrodipicolinate. This Acidiphilium cryptum (strain JF-5) protein is 4-hydroxy-tetrahydrodipicolinate reductase.